Here is a 300-residue protein sequence, read N- to C-terminus: Epimerase family protein SAR0825 (300 aa).

This sequence belongs to the NAD(P)-dependent epimerase/dehydratase family. SDR39U1 subfamily.

The chain is Epimerase family protein SAR0825 from Staphylococcus aureus (strain MRSA252).